Here is a 177-residue protein sequence, read N- to C-terminus: Large ribosomal subunit protein uL6 (177 aa).

The protein belongs to the universal ribosomal protein uL6 family. Part of the 50S ribosomal subunit.

In terms of biological role, this protein binds to the 23S rRNA, and is important in its secondary structure. It is located near the subunit interface in the base of the L7/L12 stalk, and near the tRNA binding site of the peptidyltransferase center. This is Large ribosomal subunit protein uL6 from Rhodospirillum rubrum (strain ATCC 11170 / ATH 1.1.1 / DSM 467 / LMG 4362 / NCIMB 8255 / S1).